Consider the following 199-residue polypeptide: Ribonuclease HII (199 aa).

Positions G13–G199 constitute an RNase H type-2 domain. Residues D19, E20, and D110 each coordinate a divalent metal cation.

This sequence belongs to the RNase HII family. Mn(2+) is required as a cofactor. It depends on Mg(2+) as a cofactor.

Its subcellular location is the cytoplasm. The enzyme catalyses Endonucleolytic cleavage to 5'-phosphomonoester.. Functionally, endonuclease that specifically degrades the RNA of RNA-DNA hybrids. The protein is Ribonuclease HII of Jannaschia sp. (strain CCS1).